A 399-amino-acid chain; its full sequence is Carbamoyl phosphate synthase small chain (399 aa).

The tract at residues 1 to 209 is CPSase; the sequence is MEKFKLLKLG…SAINKKLHTS (209 aa). Residues S55, G261, and G263 each coordinate L-glutamine. Residues 213-399 enclose the Glutamine amidotransferase type-1 domain; it reads RIIVLDLGVK…VYIIYKSKSS (187 aa). Residue C289 is the Nucleophile of the active site. Positions 290, 293, 329, 331, and 332 each coordinate L-glutamine. Residues H372 and E374 contribute to the active site.

This sequence belongs to the CarA family. As to quaternary structure, composed of two chains; the small (or glutamine) chain promotes the hydrolysis of glutamine to ammonia, which is used by the large (or ammonia) chain to synthesize carbamoyl phosphate. Tetramer of heterodimers (alpha,beta)4.

The protein localises to the plastid. It is found in the chloroplast. The catalysed reaction is hydrogencarbonate + L-glutamine + 2 ATP + H2O = carbamoyl phosphate + L-glutamate + 2 ADP + phosphate + 2 H(+). It catalyses the reaction L-glutamine + H2O = L-glutamate + NH4(+). Its pathway is amino-acid biosynthesis; L-arginine biosynthesis; carbamoyl phosphate from bicarbonate: step 1/1. It participates in pyrimidine metabolism; UMP biosynthesis via de novo pathway; (S)-dihydroorotate from bicarbonate: step 1/3. Functionally, small subunit of the glutamine-dependent carbamoyl phosphate synthetase (CPSase). CPSase catalyzes the formation of carbamoyl phosphate from the ammonia moiety of glutamine, carbonate, and phosphate donated by ATP, constituting the first step of 2 biosynthetic pathways, one leading to arginine and/or urea and the other to pyrimidine nucleotides. The small subunit (glutamine amidotransferase) binds and cleaves glutamine to supply the large subunit with the substrate ammonia. This chain is Carbamoyl phosphate synthase small chain, found in Cyanidium caldarium (Red alga).